The primary structure comprises 96 residues: DNA-binding protein Saci_1468 (96 aa).

It belongs to the PDCD5 family.

The sequence is that of DNA-binding protein Saci_1468 from Sulfolobus acidocaldarius (strain ATCC 33909 / DSM 639 / JCM 8929 / NBRC 15157 / NCIMB 11770).